Reading from the N-terminus, the 406-residue chain is Protein IWS1 homolog 2 (406 aa).

Disordered stretches follow at residues 1-28 (MQEL…TGRR) and 41-89 (DEVE…SEEV). Residues 10-24 (EWVKELEGENEESKF) are compositionally biased toward basic and acidic residues. Positions 41–56 (DEVEEDLDDFTEPADD) are enriched in acidic residues. Basic and acidic residues predominate over residues 69-78 (KKDESGLEKT). The 84-residue stretch at 201–284 (NLLKNWLEPL…NKWGRIIYNK (84 aa)) folds into the TFIIS N-terminal domain.

The protein belongs to the IWS1 family.

Its subcellular location is the nucleus. Functionally, transcription factor involved in RNA polymerase II (RNAPII) transcription regulation. Involved in transcription elongation. May function at post-recruitment and elongation steps of transcription. The polypeptide is Protein IWS1 homolog 2 (Arabidopsis thaliana (Mouse-ear cress)).